A 382-amino-acid polypeptide reads, in one-letter code: Chaperone protein DnaJ (382 aa).

The region spanning 6 to 70 (DYYEILGLPK…EKRAQYDRFG (65 aa)) is the J domain. Residues 131-213 (GVRKDIDIPR…CGGAGRVRNK (83 aa)) form a CR-type zinc finger. Zn(2+)-binding residues include C144, C147, C161, C164, C187, C190, C201, and C204. CXXCXGXG motif repeat units follow at residues 144-151 (CSTCSGTG), 161-168 (CPTCGGTG), 187-194 (CSTCHGRG), and 201-208 (CPVCGGAG). The interval 146–168 (TCSGTGAKPGTSPKRCPTCGGTG) is disordered. The disordered stretch occupies residues 348–382 (FENLSKGKKPQEEEKSKAEKHKKGIFEKVKDAFES). A compositionally biased stretch (basic and acidic residues) spans 371 to 382 (GIFEKVKDAFES).

It belongs to the DnaJ family. Homodimer. The cofactor is Zn(2+).

It is found in the cytoplasm. In terms of biological role, participates actively in the response to hyperosmotic and heat shock by preventing the aggregation of stress-denatured proteins and by disaggregating proteins, also in an autonomous, DnaK-independent fashion. Unfolded proteins bind initially to DnaJ; upon interaction with the DnaJ-bound protein, DnaK hydrolyzes its bound ATP, resulting in the formation of a stable complex. GrpE releases ADP from DnaK; ATP binding to DnaK triggers the release of the substrate protein, thus completing the reaction cycle. Several rounds of ATP-dependent interactions between DnaJ, DnaK and GrpE are required for fully efficient folding. Also involved, together with DnaK and GrpE, in the DNA replication of plasmids through activation of initiation proteins. In Methanosarcina acetivorans (strain ATCC 35395 / DSM 2834 / JCM 12185 / C2A), this protein is Chaperone protein DnaJ.